The chain runs to 594 residues: CDPK-related kinase 4 (594 aa).

The disordered stretch occupies residues 1 to 131; that stretch reads MGHCYSRNIS…DSGGGERLDK (131 aa). Gly-2 carries N-myristoyl glycine lipidation. The span at 37 to 58 shows a compositional bias: polar residues; sequence IPQSPVASGTPEVNSYNISPFQ. Over residues 116–131 the composition is skewed to basic and acidic residues; it reads VVDHGGDSGGGERLDK. A Protein kinase domain is found at 143-405; that stretch reads YELGKEVGRG…AAQALAHPWL (263 aa). Residues 149–157 and Lys-175 each bind ATP; that span reads VGRGHFGHT. Catalysis depends on Asp-271, which acts as the Proton acceptor. Position 311 is a phosphoserine (Ser-311). The tract at residues 409–439 is autoinhibitory domain; that stretch reads NPGLLLDFSVYKLVKSYIRASPFRRSALKAL. The tract at residues 428–448 is calmodulin binding (CaMBD); the sequence is ASPFRRSALKALSKAIPDEEL. 4 EF-hand domains span residues 446–481, 482–517, 518–557, and 558–587; these read EELV…ATDA, MMES…VYQL, EALE…GPSA, and YPLL…VTVR. Asp-462, Lys-501, Glu-506, Asn-539, Glu-546, Ser-567, Asp-569, and Lys-571 together coordinate Ca(2+). Ser-573 is subject to Phosphoserine.

The protein belongs to the protein kinase superfamily. Ser/Thr protein kinase family. CDPK subfamily. As to quaternary structure, binds calmodulin (CaM) in a calcium-dependent manner. In terms of processing, autophosphorylated.

It is found in the cell membrane. It catalyses the reaction L-seryl-[protein] + ATP = O-phospho-L-seryl-[protein] + ADP + H(+). The catalysed reaction is L-threonyl-[protein] + ATP = O-phospho-L-threonyl-[protein] + ADP + H(+). With respect to regulation, activated by calcium and calmodulin. Autophosphorylation may play an important role in the regulation of the kinase activity. Functionally, may play a role in signal transduction pathways that involve calcium as a second messenger. In Arabidopsis thaliana (Mouse-ear cress), this protein is CDPK-related kinase 4 (CRK4).